A 192-amino-acid chain; its full sequence is Xanthine phosphoribosyltransferase (192 aa).

The xanthine site is built by L20 and N27. 128-132 lines the 5-phospho-alpha-D-ribose 1-diphosphate pocket; that stretch reads ANGQA. A xanthine-binding site is contributed by K156.

It belongs to the purine/pyrimidine phosphoribosyltransferase family. Xpt subfamily. Homodimer.

It localises to the cytoplasm. The enzyme catalyses XMP + diphosphate = xanthine + 5-phospho-alpha-D-ribose 1-diphosphate. Its pathway is purine metabolism; XMP biosynthesis via salvage pathway; XMP from xanthine: step 1/1. Its function is as follows. Converts the preformed base xanthine, a product of nucleic acid breakdown, to xanthosine 5'-monophosphate (XMP), so it can be reused for RNA or DNA synthesis. This is Xanthine phosphoribosyltransferase from Listeria monocytogenes serotype 4b (strain F2365).